We begin with the raw amino-acid sequence, 66 residues long: Large ribosomal subunit protein uL29 (66 aa).

The protein belongs to the universal ribosomal protein uL29 family.

The chain is Large ribosomal subunit protein uL29 from Thermococcus onnurineus (strain NA1).